A 298-amino-acid polypeptide reads, in one-letter code: Fluorinase (298 aa).

S-adenosyl-L-methionine-binding positions include D14, 19–21 (DDS), Y75, S156, D209, N214, 268–269 (SR), and 276–278 (RNA).

The protein belongs to the SAM hydrolase / SAM-dependent halogenase family.

It carries out the reaction fluoride + S-adenosyl-L-methionine = 5'-deoxy-5'-fluoroadenosine + L-methionine. Functionally, catalyzes the formation of a C-F bond by combining S-adenosyl-L-methionine (SAM) and fluoride to generate 5'-fluoro-5'-deoxyadenosine (5'-FDA) and L-methionine. The chain is Fluorinase from Actinoplanes sp. (strain N902-109).